Here is a 465-residue protein sequence, read N- to C-terminus: NADH-quinone oxidoreductase subunit N (465 aa).

13 consecutive transmembrane segments (helical) span residues isoleucine 6–phenylalanine 26, threonine 30–alanine 50, leucine 66–leucine 86, serine 98–isoleucine 118, alanine 156–valine 176, isoleucine 194–phenylalanine 214, proline 226–isoleucine 246, phenylalanine 261–leucine 281, leucine 289–threonine 309, leucine 317–isoleucine 337, isoleucine 363–isoleucine 383, glycine 391–leucine 411, and serine 432–glutamate 452.

Belongs to the complex I subunit 2 family. NDH-1 is composed of 14 different subunits. Subunits NuoA, H, J, K, L, M, N constitute the membrane sector of the complex.

It localises to the cell membrane. The catalysed reaction is a quinone + NADH + 5 H(+)(in) = a quinol + NAD(+) + 4 H(+)(out). Its function is as follows. NDH-1 shuttles electrons from NADH, via FMN and iron-sulfur (Fe-S) centers, to quinones in the respiratory chain. The immediate electron acceptor for the enzyme in this species is believed to be ubiquinone. Couples the redox reaction to proton translocation (for every two electrons transferred, four hydrogen ions are translocated across the cytoplasmic membrane), and thus conserves the redox energy in a proton gradient. The polypeptide is NADH-quinone oxidoreductase subunit N (Wolbachia sp. subsp. Brugia malayi (strain TRS)).